The primary structure comprises 211 residues: FMN-dependent NADH:quinone oxidoreductase 3 (211 aa).

102-105 (MWNF) provides a ligand contact to FMN.

It belongs to the azoreductase type 1 family. As to quaternary structure, homodimer. It depends on FMN as a cofactor.

It carries out the reaction 2 a quinone + NADH + H(+) = 2 a 1,4-benzosemiquinone + NAD(+). The enzyme catalyses N,N-dimethyl-1,4-phenylenediamine + anthranilate + 2 NAD(+) = 2-(4-dimethylaminophenyl)diazenylbenzoate + 2 NADH + 2 H(+). In terms of biological role, quinone reductase that provides resistance to thiol-specific stress caused by electrophilic quinones. Also exhibits azoreductase activity. Catalyzes the reductive cleavage of the azo bond in aromatic azo compounds to the corresponding amines. The protein is FMN-dependent NADH:quinone oxidoreductase 3 of Bacillus cereus (strain ZK / E33L).